The sequence spans 122 residues: Large ribosomal subunit protein uL14c (122 aa).

It belongs to the universal ribosomal protein uL14 family. In terms of assembly, part of the 50S ribosomal subunit.

The protein resides in the plastid. Its subcellular location is the chloroplast. In terms of biological role, binds to 23S rRNA. In Populus trichocarpa (Western balsam poplar), this protein is Large ribosomal subunit protein uL14c.